The primary structure comprises 423 residues: Maltooligosaccharide ABC transporter solute-binding lipoprotein (423 aa).

Residues 1–24 (MSSKFMKSAAVLGTATLASLLLVA) form the signal peptide. Residue cysteine 25 is the site of N-palmitoyl cysteine attachment. Cysteine 25 is lipidated: S-diacylglycerol cysteine. Residues tyrosine 52, aspartate 77, aspartate 83, 103–104 (DR), glutamate 148, aspartate 193, asparagine 196, 251–254 (EGAG), tryptophan 274, and lysine 307 each bind substrate.

It belongs to the bacterial solute-binding protein 1 family.

It localises to the cell membrane. Its function is as follows. Part of an ABC transporter complex involved in the uptake of maltodextrins. Binds glycogen-derived linear maltooligosaccharides increasing in size from maltotriose to maltooctaose with the highest affinity for maltotriose. Has a very weak affinity for maltose. Has also a very low affinity for maltotetraitol, indicating that the binding is selective for maltooligosaccharides with an intact reducing end. This Streptococcus pneumoniae serotype 4 (strain ATCC BAA-334 / TIGR4) protein is Maltooligosaccharide ABC transporter solute-binding lipoprotein.